The following is a 345-amino-acid chain: N-acetyl-gamma-glutamyl-phosphate reductase (345 aa).

Cys-153 is a catalytic residue.

This sequence belongs to the NAGSA dehydrogenase family. Type 1 subfamily.

It is found in the cytoplasm. The enzyme catalyses N-acetyl-L-glutamate 5-semialdehyde + phosphate + NADP(+) = N-acetyl-L-glutamyl 5-phosphate + NADPH + H(+). It participates in amino-acid biosynthesis; L-arginine biosynthesis; N(2)-acetyl-L-ornithine from L-glutamate: step 3/4. Its function is as follows. Catalyzes the NADPH-dependent reduction of N-acetyl-5-glutamyl phosphate to yield N-acetyl-L-glutamate 5-semialdehyde. In Methylacidiphilum infernorum (isolate V4) (Methylokorus infernorum (strain V4)), this protein is N-acetyl-gamma-glutamyl-phosphate reductase.